Reading from the N-terminus, the 839-residue chain is Translation initiation factor IF-2 (839 aa).

Composition is skewed to basic and acidic residues over residues methionine 1 to lysine 12 and alanine 57 to alanine 67. 2 disordered regions span residues methionine 1–lysine 21 and alanine 57–leucine 244. A compositionally biased stretch (low complexity) spans glutamate 68–threonine 90. Composition is skewed to basic and acidic residues over residues proline 104–threonine 167, arginine 185–arginine 199, and glycine 212–glycine 233. The 171-residue stretch at threonine 338–threonine 508 folds into the tr-type G domain. Residues glycine 347–threonine 354 are G1. Residue glycine 347–threonine 354 participates in GTP binding. Positions glycine 372 to histidine 376 are G2. Residues aspartate 394–glycine 397 form a G3 region. GTP is bound by residues aspartate 394–histidine 398 and asparagine 448–aspartate 451. Residues asparagine 448–aspartate 451 form a G4 region. Positions serine 484–lysine 486 are G5.

This sequence belongs to the TRAFAC class translation factor GTPase superfamily. Classic translation factor GTPase family. IF-2 subfamily.

It localises to the cytoplasm. In terms of biological role, one of the essential components for the initiation of protein synthesis. Protects formylmethionyl-tRNA from spontaneous hydrolysis and promotes its binding to the 30S ribosomal subunits. Also involved in the hydrolysis of GTP during the formation of the 70S ribosomal complex. This is Translation initiation factor IF-2 from Haemophilus ducreyi (strain 35000HP / ATCC 700724).